The chain runs to 126 residues: MLLTLLKGKLHRARVTHADLHYEGSCGIDGDLLDLAGIRENESIDIYNVSNGKRFRTYAIRAEAGSGIISLNGAAAYMADLGDIVIICAYAQMDEQEADTHKPKLVYCNEDNTVKDTANIIPVQVS.

Residue Ser-25 is the Schiff-base intermediate with substrate; via pyruvic acid of the active site. Ser-25 carries the post-translational modification Pyruvic acid (Ser). Substrate is bound at residue Thr-57. Tyr-58 serves as the catalytic Proton donor. Residue 73-75 (GAA) coordinates substrate.

Belongs to the PanD family. As to quaternary structure, heterooctamer of four alpha and four beta subunits. The cofactor is pyruvate. In terms of processing, is synthesized initially as an inactive proenzyme, which is activated by self-cleavage at a specific serine bond to produce a beta-subunit with a hydroxyl group at its C-terminus and an alpha-subunit with a pyruvoyl group at its N-terminus.

The protein localises to the cytoplasm. The enzyme catalyses L-aspartate + H(+) = beta-alanine + CO2. It functions in the pathway cofactor biosynthesis; (R)-pantothenate biosynthesis; beta-alanine from L-aspartate: step 1/1. In terms of biological role, catalyzes the pyruvoyl-dependent decarboxylation of aspartate to produce beta-alanine. The protein is Aspartate 1-decarboxylase of Psychrobacter sp. (strain PRwf-1).